A 1072-amino-acid chain; its full sequence is Carbamoyl phosphate synthase large chain (1072 aa).

The carboxyphosphate synthetic domain stretch occupies residues 1 to 401 (MPKYKDINKV…SLLKAVRSLE (401 aa)). Residues Arg129, Arg169, Gly175, Gly176, Lys208, Leu210, Glu215, Gly241, Val242, His243, Gln284, and Glu298 each coordinate ATP. One can recognise an ATP-grasp 1 domain in the interval 133 to 327 (KRKMQEIGEP…IAKIAAKIAI (195 aa)). Residues Gln284, Glu298, and Asn300 each contribute to the Mg(2+) site. Positions 284, 298, and 300 each coordinate Mn(2+). Residues 402 to 544 (IKAYGLRLNN…YIYSTYGEED (143 aa)) form an oligomerization domain region. A carbamoyl phosphate synthetic domain region spans residues 545 to 929 (EVEIHDMPKV…ALYKALEGAG (385 aa)). The ATP-grasp 2 domain occupies 671–861 (SKLLRELNIN…MVKLAVEVAL (191 aa)). The ATP site is built by Arg707, Lys746, Ile748, Glu752, Gly777, Val778, His779, Ser780, Gln820, and Glu832. Mg(2+) is bound by residues Gln820, Glu832, and Asn834. Mn(2+)-binding residues include Gln820, Glu832, and Asn834. The region spanning 930–1072 (LKIPKKGKIL…QKDNVKNLVL (143 aa)) is the MGS-like domain. The interval 930 to 1072 (LKIPKKGKIL…QKDNVKNLVL (143 aa)) is allosteric domain.

This sequence belongs to the CarB family. As to quaternary structure, composed of two chains; the small (or glutamine) chain promotes the hydrolysis of glutamine to ammonia, which is used by the large (or ammonia) chain to synthesize carbamoyl phosphate. Tetramer of heterodimers (alpha,beta)4. Mg(2+) serves as cofactor. Requires Mn(2+) as cofactor.

It catalyses the reaction hydrogencarbonate + L-glutamine + 2 ATP + H2O = carbamoyl phosphate + L-glutamate + 2 ADP + phosphate + 2 H(+). The catalysed reaction is hydrogencarbonate + NH4(+) + 2 ATP = carbamoyl phosphate + 2 ADP + phosphate + 2 H(+). Its pathway is amino-acid biosynthesis; L-arginine biosynthesis; carbamoyl phosphate from bicarbonate: step 1/1. It participates in pyrimidine metabolism; UMP biosynthesis via de novo pathway; (S)-dihydroorotate from bicarbonate: step 1/3. Its function is as follows. Large subunit of the glutamine-dependent carbamoyl phosphate synthetase (CPSase). CPSase catalyzes the formation of carbamoyl phosphate from the ammonia moiety of glutamine, carbonate, and phosphate donated by ATP, constituting the first step of 2 biosynthetic pathways, one leading to arginine and/or urea and the other to pyrimidine nucleotides. The large subunit (synthetase) binds the substrates ammonia (free or transferred from glutamine from the small subunit), hydrogencarbonate and ATP and carries out an ATP-coupled ligase reaction, activating hydrogencarbonate by forming carboxy phosphate which reacts with ammonia to form carbamoyl phosphate. This is Carbamoyl phosphate synthase large chain from Thermoanaerobacter pseudethanolicus (strain ATCC 33223 / 39E) (Clostridium thermohydrosulfuricum).